The sequence spans 192 residues: Potassium-transporting ATPase KdpC subunit (192 aa).

Residues Pro-7–Met-27 traverse the membrane as a helical segment.

It belongs to the KdpC family. As to quaternary structure, the system is composed of three essential subunits: KdpA, KdpB and KdpC.

Its subcellular location is the cell inner membrane. Its function is as follows. Part of the high-affinity ATP-driven potassium transport (or Kdp) system, which catalyzes the hydrolysis of ATP coupled with the electrogenic transport of potassium into the cytoplasm. This subunit acts as a catalytic chaperone that increases the ATP-binding affinity of the ATP-hydrolyzing subunit KdpB by the formation of a transient KdpB/KdpC/ATP ternary complex. The chain is Potassium-transporting ATPase KdpC subunit from Paraburkholderia xenovorans (strain LB400).